Consider the following 476-residue polypeptide: Methylenetetrahydrofolate--tRNA-(uracil-5-)-methyltransferase TrmFO (476 aa).

Glycine 14–glycine 19 is a binding site for FAD.

Belongs to the MnmG family. TrmFO subfamily. It depends on FAD as a cofactor.

It is found in the cytoplasm. The catalysed reaction is uridine(54) in tRNA + (6R)-5,10-methylene-5,6,7,8-tetrahydrofolate + NADH + H(+) = 5-methyluridine(54) in tRNA + (6S)-5,6,7,8-tetrahydrofolate + NAD(+). The enzyme catalyses uridine(54) in tRNA + (6R)-5,10-methylene-5,6,7,8-tetrahydrofolate + NADPH + H(+) = 5-methyluridine(54) in tRNA + (6S)-5,6,7,8-tetrahydrofolate + NADP(+). Its function is as follows. Catalyzes the folate-dependent formation of 5-methyl-uridine at position 54 (M-5-U54) in all tRNAs. This Brucella anthropi (strain ATCC 49188 / DSM 6882 / CCUG 24695 / JCM 21032 / LMG 3331 / NBRC 15819 / NCTC 12168 / Alc 37) (Ochrobactrum anthropi) protein is Methylenetetrahydrofolate--tRNA-(uracil-5-)-methyltransferase TrmFO.